We begin with the raw amino-acid sequence, 382 residues long: Transcription factor MYB104 (382 aa).

2 HTH myb-type domains span residues 13–69 and 70–120; these read KKTF…KPSL and KKGP…MRLK. 2 DNA-binding regions (H-T-H motif) span residues 41-65 and 93-116; these read WTHVPKRTGLPHNPASCRFRWMNHL and WSQMAREFPGRTDNEIKNFWNARR. Positions 326 to 364 are disordered; sequence IPKTDTSSESQLFQSSLRSHTDATPDIANTTGYVGSNER. Polar residues-rich tracts occupy residues 329-343 and 352-364; these read TDTSSESQLFQSSLR and IANTTGYVGSNER.

Its subcellular location is the nucleus. This Arabidopsis thaliana (Mouse-ear cress) protein is Transcription factor MYB104 (MYB104).